The primary structure comprises 154 residues: Endoribonuclease YbeY (154 aa).

Residues His113, His117, and His123 each coordinate Zn(2+).

It belongs to the endoribonuclease YbeY family. The cofactor is Zn(2+).

Its subcellular location is the cytoplasm. Single strand-specific metallo-endoribonuclease involved in late-stage 70S ribosome quality control and in maturation of the 3' terminus of the 16S rRNA. The polypeptide is Endoribonuclease YbeY (Vibrio cholerae serotype O1 (strain ATCC 39541 / Classical Ogawa 395 / O395)).